An 81-amino-acid polypeptide reads, in one-letter code: Small cysteine-rich protein 1 1 (81 aa).

Residues 1–19 form the signal peptide; that stretch reads MGVHFNICLLLLLVATISS. A propeptide spanning residues 20–39 is cleaved from the precursor; it reads QTLKATEKDDSTDENPFGIY.

It belongs to the Cnidaria small cysteine-rich protein (SCRiP) family. alpha subfamily. The basic myotoxic domain of rattlesnake crotamine toxins (with 6 Cys residues) has been detected in this protein. However, this protein contains 2 additional Cys at the C-terminal region. Hence, this protein may contain 4 disulfide bonds instead of the 3 suggested by the myotoxin domain.

Its subcellular location is the secreted. The protein resides in the nematocyst. Functionally, induces neurotoxic symptoms on zebrafish. Has also been claimed to be implied in calcification, but tests on homolog proteins suggest that proteins of this family have a neurotoxic function and not a calcification function. The chain is Small cysteine-rich protein 1 1 from Montipora capitata (Rice coral).